The sequence spans 535 residues: MALPSLHEFPWLTTVIVYPVVAALFIPLIPAPAGDPTTRVYAQKLAERVRWFALFIAVTDLLILLAGFYVGYDPSQTSLQLLERYTWVPQVGLSWSVGADGLSMPLILLTAFVTTLAILAAWPVTLKPRLFYFLMLAMYGGQIGVFAVQDMLLFFLMWELELIPVYLLLSIWGGYNRLYAATKFILYTALSSLFILVAGLAMAFYGDPISFDMTDLAHKAYPLSFQLLLYGAFLIAYGVKLPVFPLHTWLPDAHGEATAPVHMLLAGILLKMGGYALMRMNVGMLPDAHLYFAPVLIVLGVVNIIFAALTSFAQRNLKRKIAYSSISHMGFVLIGIGSLTEIGMSGAMLQMISHGLIGASLFFLVGATYDRTHTLELEEMGGVGLKMPKIFSMFTACSLASLALPGMSGFVAELMVFIGMATTDAYSLPFRLVVVFLAAVGVILTPIYLLSMLRQIFFGPENKELTEHEELVDAEPREVFIIACLLIPIIGIGLYPKLVTSLYDQSTNALVALLRQELSSIGATVAQAPALYSAD.

14 helical membrane-spanning segments follow: residues 9–29 (FPWLTTVIVYPVVAALFIPLI), 51–71 (WFALFIAVTDLLILLAGFYVG), 106–126 (LILLTAFVTTLAILAAWPVTL), 130–150 (LFYFLMLAMYGGQIGVFAVQD), 152–172 (LLFFLMWELELIPVYLLLSIW), 184–204 (FILYTALSSLFILVAGLAMAF), 227–247 (LLLYGAFLIAYGVKLPVFPLH), 258–278 (TAPVHMLLAGILLKMGGYALM), 290–310 (LYFAPVLIVLGVVNIIFAALT), 326–346 (ISHMGFVLIGIGSLTEIGMSG), 347–367 (AMLQMISHGLIGASLFFLVGA), 399–419 (LASLALPGMSGFVAELMVFIG), 432–452 (LVVVFLAAVGVILTPIYLLSM), and 479–499 (VFIIACLLIPIIGIGLYPKLV).

The protein belongs to the complex I subunit 4 family.

The protein resides in the cellular thylakoid membrane. It catalyses the reaction a plastoquinone + NADH + (n+1) H(+)(in) = a plastoquinol + NAD(+) + n H(+)(out). The enzyme catalyses a plastoquinone + NADPH + (n+1) H(+)(in) = a plastoquinol + NADP(+) + n H(+)(out). Functionally, NDH-1 shuttles electrons from NAD(P)H, via FMN and iron-sulfur (Fe-S) centers, to quinones in the respiratory chain. The immediate electron acceptor for the enzyme in this species is believed to be plastoquinone. Couples the redox reaction to proton translocation (for every two electrons transferred, four hydrogen ions are translocated across the cytoplasmic membrane), and thus conserves the redox energy in a proton gradient. The sequence is that of NAD(P)H-quinone oxidoreductase chain 4 2 from Synechococcus sp. (strain JA-3-3Ab) (Cyanobacteria bacterium Yellowstone A-Prime).